A 132-amino-acid chain; its full sequence is Glycine cleavage system H protein (132 aa).

The 83-residue stretch at 24-106 folds into the Lipoyl-binding domain; it reads IATIGLSAFA…YGDGWLIKVR (83 aa). Position 65 is an N6-lipoyllysine (Lys65).

The protein belongs to the GcvH family. As to quaternary structure, the glycine cleavage system is composed of four proteins: P, T, L and H. Requires (R)-lipoate as cofactor.

The glycine cleavage system catalyzes the degradation of glycine. The H protein shuttles the methylamine group of glycine from the P protein to the T protein. The polypeptide is Glycine cleavage system H protein (Rippkaea orientalis (strain PCC 8801 / RF-1) (Cyanothece sp. (strain PCC 8801))).